The chain runs to 293 residues: Acetyl-coenzyme A carboxylase carboxyl transferase subunit beta (293 aa).

Residues 29–293 (LWVKCSECSQ…GVNELVEANI (265 aa)) enclose the CoA carboxyltransferase N-terminal domain. 4 residues coordinate Zn(2+): cysteine 33, cysteine 36, cysteine 52, and cysteine 55. Residues 33 to 55 (CSECSQVAYRKDLISNFNVCSNC) form a C4-type zinc finger.

This sequence belongs to the AccD/PCCB family. In terms of assembly, acetyl-CoA carboxylase is a heterohexamer composed of biotin carboxyl carrier protein (AccB), biotin carboxylase (AccC) and two subunits each of ACCase subunit alpha (AccA) and ACCase subunit beta (AccD). The cofactor is Zn(2+).

The protein localises to the cytoplasm. The catalysed reaction is N(6)-carboxybiotinyl-L-lysyl-[protein] + acetyl-CoA = N(6)-biotinyl-L-lysyl-[protein] + malonyl-CoA. It participates in lipid metabolism; malonyl-CoA biosynthesis; malonyl-CoA from acetyl-CoA: step 1/1. Functionally, component of the acetyl coenzyme A carboxylase (ACC) complex. Biotin carboxylase (BC) catalyzes the carboxylation of biotin on its carrier protein (BCCP) and then the CO(2) group is transferred by the transcarboxylase to acetyl-CoA to form malonyl-CoA. The protein is Acetyl-coenzyme A carboxylase carboxyl transferase subunit beta of Prochlorococcus marinus (strain MIT 9215).